The primary structure comprises 133 residues: MGMTSDSIANLLTRIRNALMAEHLYIDIEHSKMLEAIVRILKQHGFVAHFLVKEENRKRLMRVFLRYGEDRRPVIHALKRVSKPSRRVYVSAAKIPYVFGNMGIAVLSTPQGVLEGSVARAKNVGGELLCLVW.

Belongs to the universal ribosomal protein uS8 family. In terms of assembly, part of the 30S ribosomal subunit. Contacts proteins S5 and S12.

In terms of biological role, one of the primary rRNA binding proteins, it binds directly to 16S rRNA central domain where it helps coordinate assembly of the platform of the 30S subunit. The polypeptide is Small ribosomal subunit protein uS8 (Chlamydia trachomatis serovar L2b (strain UCH-1/proctitis)).